The chain runs to 65 residues: MPKMKSNRGAAKRFKRTGSGKFKHRQAFLNHILTKKTTKRKRHLRHTLVTSGSDQAALRRMLPYG.

The interval 1 to 23 (MPKMKSNRGAAKRFKRTGSGKFK) is disordered. Basic residues predominate over residues 10-23 (AAKRFKRTGSGKFK).

It belongs to the bacterial ribosomal protein bL35 family.

This chain is Large ribosomal subunit protein bL35, found in Acidithiobacillus ferrooxidans (strain ATCC 53993 / BNL-5-31) (Leptospirillum ferrooxidans (ATCC 53993)).